The primary structure comprises 442 residues: Protein bangles and beads (442 aa).

Positions 47–442 are disordered; sequence AVEPAPLKPE…SEESSESKEN (396 aa). Composition is skewed to basic and acidic residues over residues 55-67, 114-125, and 133-146; these read PEAE…KTIE, PEKKTLPEEAKP, and EAEK…RTEA. The span at 159-172 shows a compositional bias: low complexity; the sequence is AIEQAPEAPAANAE. 2 stretches are compositionally biased toward basic and acidic residues: residues 177 to 194 and 204 to 240; these read VVDE…KSAE and AEKE…EPAK. Composition is skewed to low complexity over residues 241–255 and 272–288; these read AAEA…AATK and SSPA…AAQA. Residues 329 to 339 show a composition bias toward basic and acidic residues; sequence EAVKEQEKEQP. Over residues 357–376 the composition is skewed to low complexity; sequence TAAPAGAPEPTAAVAPAAVP. Positions 408 to 442 are enriched in basic and acidic residues; it reads EPKKSSEEKSDKSESKVDESSESKESEESSESKEN. 4 positions are modified to phosphoserine: serine 430, serine 433, serine 436, and serine 437.

As to expression, expressed in the embryonic CNS, in sets of cells that are segmentally reiterated along the periphery of the nervous system.

Functionally, may play an important role during development. This is Protein bangles and beads (bnb) from Drosophila melanogaster (Fruit fly).